The sequence spans 620 residues: MKEYRLTDWLPTTKKEVELRGWDELDVILFSGDAYVDHPSFGAAVIGRILEAEGLKVAIIPQPNWRDDLRDFRKLGRPRLFFGISAGSMDSMVNKYTANKRLRSEDAYTPDGRPDMRPEYPSIVYSQILKRLYPDVPVILGSIEASLRRLSHYDYWQDKVQKSILCDSGADLLIYGMGEKPIVELTRKMKELLPAEDASLTAGELKKIAGTIPQTAYLCRATEWTPAADDIQLYSHEECLADKKKQASNFRHIEEESNKYAASRITQEVDNKVVVVNPPYPPMSQEELDHSYDLPYTRLPHPKYKGKRIPAYDMIKFSVNIHRGCFGGCAFCTISAHQGKFIVSRSKKSILNEVKEVMQLPDFKGYLSDLGGPSANMYQMKGKDEAICKKCKRPSCIHPKVCPNLNSDHCPLLDIYKAVDAIPGIKKSFIGSGVRYDLLLHQSKDAATNRSTAEYTRELIVNHVSGRLKVAPEHTSDRVLSIMRKPSFEQFETFKKIFDRINREENLRQQLIPYFISSHPGCKEEDMAELAVITKRLDFHLEQVQDFTPTPMTVATEAWYSGFHPYTLEPVFSAKTQREKLAQRQFFFWYKPEERKNILNELRRIGRQDLIDKLYGKRNK.

Positions 311–591 (AYDMIKFSVN…AQRQFFFWYK (281 aa)) constitute a Radical SAM core domain. 3 residues coordinate [4Fe-4S] cluster: C325, C329, and C332.

This sequence belongs to the UPF0313 family. It depends on [4Fe-4S] cluster as a cofactor.

This chain is UPF0313 protein BT_0254, found in Bacteroides thetaiotaomicron (strain ATCC 29148 / DSM 2079 / JCM 5827 / CCUG 10774 / NCTC 10582 / VPI-5482 / E50).